Here is a 690-residue protein sequence, read N- to C-terminus: Sodium-dependent phosphate transport protein 2B (690 aa).

Positions 1–42 (MAPWPELGDAQPNPDKYLEGAAGQQPTAPDKSKETNKTDNTE) are disordered. Topologically, residues 1–100 (MAPWPELGDA…ILCFFQGIGR (100 aa)) are cytoplasmic. Basic and acidic residues predominate over residues 30–40 (DKSKETNKTDN). A helical transmembrane segment spans residues 101-121 (LILLLGFLYFFVCSLDILSSA). Residues 122 to 135 (FQLVGGKMAGQFFS) lie on the Extracellular side of the membrane. A helical transmembrane segment spans residues 136–156 (NSSIMSNPLLGLVIGVLVTVL). Over 157–212 (VQSSSTSTSIVVSMVSSSLLTVRAAIPIIMGANIGTSITNTIVALMQVGDRSEFRR) the chain is Cytoplasmic. Residues 213-233 (AFAGATVHDFFNWLSVLVLLP) form a helical membrane-spanning segment. The Extracellular portion of the chain corresponds to 234-362 (VEVATHYLEI…IFVNFHLPDL (129 aa)). 5 N-linked (GlcNAc...) asparagine glycosylation sites follow: Asn295, Asn308, Asn313, Asn321, and Asn340. A disulfide bridge connects residues Cys303 and Cys350. Residues 363–383 (AVGTILLILSLLVLCGCLIMI) traverse the membrane as a helical segment. Residues 384–407 (VKILGSVLKGQVATVIKKTINTDF) are Cytoplasmic-facing. Residues 408 to 428 (PFPFAWLTGYLAILVGAGMTF) form a helical membrane-spanning segment. The Extracellular portion of the chain corresponds to 429-485 (IVQSSSVFTSALTPLIGIGVITIERAYPLTLGSNIGTTTTAILAALASPGNALRSSL). The helical transmembrane segment at 486-506 (QIALCHFFFNISGILLWYPIP) threads the bilayer. Over 507 to 525 (FTRLPIRMAKGLGNISAKY) the chain is Cytoplasmic. A helical membrane pass occupies residues 526–546 (RWFAVFYLIIFFFLIPLTVFG). Residues 547–552 (LSLAGW) are Extracellular-facing. The helical transmembrane segment at 553–573 (RVLVGVGVPVVFIIILVLCLR) threads the bilayer. At 574–689 (LLQSRCPRVL…ASDSKTECTA (116 aa)) the chain is on the cytoplasmic side.

It belongs to the SLC34A transporter family. Highly expressed in lung. Also detected in pancreas, kidney, small intestine, ovary, testis, prostate and mammary gland. In lung, it is found in alveolar type II cells but not in bronchiolar epithelium.

Its subcellular location is the apical cell membrane. It carries out the reaction 3 Na(+)(out) + phosphate(out) = 3 Na(+)(in) + phosphate(in). Functionally, involved in actively transporting phosphate into cells via Na(+) cotransport. This Homo sapiens (Human) protein is Sodium-dependent phosphate transport protein 2B (SLC34A2).